The sequence spans 443 residues: Ribulose bisphosphate carboxylase large chain (443 aa).

An N6,N6,N6-trimethyllysine modification is found at Lys7. Residues Asn116 and Thr166 each contribute to the substrate site. Lys168 functions as the Proton acceptor in the catalytic mechanism. Residue Lys170 participates in substrate binding. Positions 194, 196, and 197 each coordinate Mg(2+). N6-carboxylysine is present on Lys194. His287 (proton acceptor) is an active-site residue. Residues Arg288, His320, and Ser372 each coordinate substrate.

This sequence belongs to the RuBisCO large chain family. Type I subfamily. As to quaternary structure, heterohexadecamer of 8 large chains and 8 small chains; disulfide-linked. The disulfide link is formed within the large subunit homodimers. Requires Mg(2+) as cofactor. The disulfide bond which can form in the large chain dimeric partners within the hexadecamer appears to be associated with oxidative stress and protein turnover.

Its subcellular location is the plastid. It localises to the chloroplast. The catalysed reaction is 2 (2R)-3-phosphoglycerate + 2 H(+) = D-ribulose 1,5-bisphosphate + CO2 + H2O. It catalyses the reaction D-ribulose 1,5-bisphosphate + O2 = 2-phosphoglycolate + (2R)-3-phosphoglycerate + 2 H(+). RuBisCO catalyzes two reactions: the carboxylation of D-ribulose 1,5-bisphosphate, the primary event in carbon dioxide fixation, as well as the oxidative fragmentation of the pentose substrate in the photorespiration process. Both reactions occur simultaneously and in competition at the same active site. The protein is Ribulose bisphosphate carboxylase large chain of Abies sachalinensis (Sakhalin fir).